An 83-amino-acid polypeptide reads, in one-letter code: uncharacterized protein (83 aa).

Residues 58-83 (EHGHDDEYDEFSDPNAWVPRRSRDTG) form a disordered region.

This is an uncharacterized protein from Mycobacterium tuberculosis (strain CDC 1551 / Oshkosh).